The following is a 131-amino-acid chain: Glycine cleavage system H protein (131 aa).

In terms of domain architecture, Lipoyl-binding spans 24–106 (TVRVGITDYA…YGEGWLVELQ (83 aa)). N6-lipoyllysine is present on Lys65.

It belongs to the GcvH family. As to quaternary structure, the glycine cleavage system is composed of four proteins: P, T, L and H. (R)-lipoate serves as cofactor.

Its function is as follows. The glycine cleavage system catalyzes the degradation of glycine. The H protein shuttles the methylamine group of glycine from the P protein to the T protein. This Mycolicibacterium vanbaalenii (strain DSM 7251 / JCM 13017 / BCRC 16820 / KCTC 9966 / NRRL B-24157 / PYR-1) (Mycobacterium vanbaalenii) protein is Glycine cleavage system H protein.